Consider the following 95-residue polypeptide: MTKISSSDVRKVAQLARLELPEDQIETYTEQLEEILSYVDQLQEIDTENIPPTTRAVEVVNSMRDDLVEVNCSREDLLNQAPHREGDFFRVPKIL.

This sequence belongs to the GatC family. As to quaternary structure, heterotrimer of A, B and C subunits.

The catalysed reaction is L-glutamyl-tRNA(Gln) + L-glutamine + ATP + H2O = L-glutaminyl-tRNA(Gln) + L-glutamate + ADP + phosphate + H(+). It carries out the reaction L-aspartyl-tRNA(Asn) + L-glutamine + ATP + H2O = L-asparaginyl-tRNA(Asn) + L-glutamate + ADP + phosphate + 2 H(+). In terms of biological role, allows the formation of correctly charged Asn-tRNA(Asn) or Gln-tRNA(Gln) through the transamidation of misacylated Asp-tRNA(Asn) or Glu-tRNA(Gln) in organisms which lack either or both of asparaginyl-tRNA or glutaminyl-tRNA synthetases. The reaction takes place in the presence of glutamine and ATP through an activated phospho-Asp-tRNA(Asn) or phospho-Glu-tRNA(Gln). The polypeptide is Aspartyl/glutamyl-tRNA(Asn/Gln) amidotransferase subunit C (Prochlorococcus marinus (strain NATL1A)).